The sequence spans 242 residues: DNA repair protein RecO (242 aa).

It belongs to the RecO family.

Involved in DNA repair and RecF pathway recombination. This Dechloromonas aromatica (strain RCB) protein is DNA repair protein RecO.